A 245-amino-acid polypeptide reads, in one-letter code: S-methyl-5'-thioinosine phosphorylase (245 aa).

Residues threonine 10 and 52–53 each bind phosphate; that span reads RH. Substrate is bound at residue methionine 185. Threonine 186 lines the phosphate pocket. Residue 209–211 participates in substrate binding; it reads NPA.

This sequence belongs to the PNP/MTAP phosphorylase family. MTAP subfamily. Homotrimer.

It catalyses the reaction S-methyl-5'-thioinosine + phosphate = 5-(methylsulfanyl)-alpha-D-ribose 1-phosphate + hypoxanthine. It participates in purine metabolism; purine nucleoside salvage. Its function is as follows. Catalyzes the reversible phosphorylation of S-methyl-5'-thioinosine (MTI) to hypoxanthine and 5-methylthioribose-1-phosphate. Involved in the breakdown of S-methyl-5'-thioadenosine (MTA), a major by-product of polyamine biosynthesis. Catabolism of (MTA) occurs via deamination to MTI and phosphorolysis to hypoxanthine. Involved in quorum sensing. This Pseudomonas aeruginosa (strain ATCC 15692 / DSM 22644 / CIP 104116 / JCM 14847 / LMG 12228 / 1C / PRS 101 / PAO1) protein is S-methyl-5'-thioinosine phosphorylase.